A 166-amino-acid chain; its full sequence is Small ribosomal subunit protein uS9 (166 aa).

Residues 135-166 (KKAGFLTRDPRATERKKYGLKKARKAPQYSKR) form a disordered region. Basic and acidic residues predominate over residues 142-151 (RDPRATERKK). Basic residues predominate over residues 152 to 166 (YGLKKARKAPQYSKR).

Belongs to the universal ribosomal protein uS9 family.

This Mycolicibacterium paratuberculosis (strain ATCC BAA-968 / K-10) (Mycobacterium paratuberculosis) protein is Small ribosomal subunit protein uS9.